A 393-amino-acid polypeptide reads, in one-letter code: MCSARVTPDVVLLFDPQYWNYLHVARAVAPHALLITDISVFPAVFRLPWEYIVLAGSACPFATSLAHHDASCSPSHALPLPFVAPDLLASGGSVATSAWECARYLGATTIVYIGLDLAFPGARTHFRGALFEERAHLQSGRVAPAETTSFCALHSLPLYPVPAASDPHPGKNSPASPTGENKEQTVLTDARFSLYAVWLEAHLARYTHIKTYALEPAGRRVAGITPLRFSQLVTLLNRSAAVPHCRTMYSRRRRLYSRYRNSSVQVNCTDAVRWRRTMKSTPVHCLGHFTKKKKSAEGARNLWRALRRADTRCASPHNLEHALERTRSFLNAMPLTPTTYENKTHALYTALCTLLPTEPTYRARAHAHLFELLTRTLKFCAAYTEEEGEWREA.

The segment at 164-183 (ASDPHPGKNSPASPTGENKE) is disordered. Polar residues predominate over residues 173–183 (SPASPTGENKE).

This is an uncharacterized protein from Treponema pallidum (strain Nichols).